Consider the following 411-residue polypeptide: Snake venom metalloproteinase VMP1 (411 aa).

The signal sequence occupies residues methionine 1–serine 20. The propeptide occupies isoleucine 21–proline 189. Residues arginine 197–proline 393 form the Peptidase M12B domain. The Ca(2+) site is built by glutamate 200 and aspartate 284. 3 disulfides stabilise this stretch: cysteine 308-cysteine 388, cysteine 348-cysteine 372, and cysteine 350-cysteine 355. A glycan (N-linked (GlcNAc...) asparagine) is linked at asparagine 311. Histidine 333 serves as a coordination point for Zn(2+). The active site involves glutamate 334. Residues histidine 337 and histidine 343 each contribute to the Zn(2+) site. Ca(2+) is bound by residues cysteine 388, asparagine 391, valine 403, asparagine 406, leucine 408, and glutamate 410.

It belongs to the venom metalloproteinase (M12B) family. P-I subfamily. Monomer. Requires Zn(2+) as cofactor. As to expression, expressed by the venom gland.

The protein localises to the secreted. Its activity is regulated as follows. Inhibited by EDTA and 1,10-phenanthroline, but not by PMSF. Its function is as follows. This venom zinc protease has fibrinolytic activity. The recombinant enzyme cleaves both alpha- (FGA) and beta-chains (FGB) of fibrinogen, but not the gamma-chain. The recombinant protein does not produce hemorrhage in mice and does not have effect on ADP- or collagen-stimulated platelet aggregation. This is Snake venom metalloproteinase VMP1 from Agkistrodon piscivorus leucostoma (Western cottonmouth).